Reading from the N-terminus, the 489-residue chain is Neuropeptide CCHamide-2 receptor (489 aa).

Topologically, residues 1–74 (MYASLMDVGQ…DRPETYIVTV (74 aa)) are extracellular. N-linked (GlcNAc...) asparagine glycans are attached at residues asparagine 25 and asparagine 50. A helical membrane pass occupies residues 75–95 (LYTLIFIVGVLGNGTLVIIFF). Over 96–107 (RHRSMRNIPNTY) the chain is Cytoplasmic. Residues 108–128 (ILSLALADLLVILVCVPVATI) form a helical membrane-spanning segment. Over 129-143 (VYTQESWPFERNMCR) the chain is Extracellular. Cysteine 142 and cysteine 225 are joined by a disulfide. The helical transmembrane segment at 144-164 (ISEFFKDISIGVSVFTLTALS) threads the bilayer. Residues 165-184 (GERYCAIVNPLRKLQTKPLT) lie on the Cytoplasmic side of the membrane. A helical transmembrane segment spans residues 185–205 (VFTAVMIWILAILLGMPSVLF). Over 206–235 (SDIKSYPVFTATGNMTIEVCSPFRDPEYAK) the chain is Extracellular. Asparagine 219 carries an N-linked (GlcNAc...) asparagine glycan. A helical membrane pass occupies residues 236–256 (FMVAGKALVYYLLPLSIIGAL). Residues 257–293 (YIMMAKRLHMSARNMPGEQQSMQSRTQARARLHVARM) lie on the Cytoplasmic side of the membrane. Residues 294-314 (VVAFVVVFFICFFPYHVFELW) traverse the membrane as a helical segment. The Extracellular portion of the chain corresponds to 315 to 333 (YHFYPTAEEDFDEFWNVLR). A helical membrane pass occupies residues 334-354 (IVGFCTSFLNSCVNPVALYCV). Residues 355–489 (SGVFRQHFNR…NRYESGVMRY (135 aa)) are Cytoplasmic-facing. Residues 438 to 468 (SFHRQDSMPLQHGNAHGGGAGGGSSGLGAGG) form a disordered region. The span at 452–468 (AHGGGAGGGSSGLGAGG) shows a compositional bias: gly residues.

The protein belongs to the G-protein coupled receptor 1 family. As to expression, highly expressed in larval brain. Also highly expressed in adult brain with very low levels in larval and adult gut.

Its subcellular location is the cell membrane. Receptor for the neuropeptide CCHamide-2. The chain is Neuropeptide CCHamide-2 receptor from Drosophila melanogaster (Fruit fly).